The primary structure comprises 106 residues: Large ribosomal subunit protein bL21 (106 aa).

It belongs to the bacterial ribosomal protein bL21 family. In terms of assembly, part of the 50S ribosomal subunit. Contacts protein L20.

Functionally, this protein binds to 23S rRNA in the presence of protein L20. The polypeptide is Large ribosomal subunit protein bL21 (Chlamydia felis (strain Fe/C-56) (Chlamydophila felis)).